Reading from the N-terminus, the 168-residue chain is Photosystem I assembly protein Ycf3 (168 aa).

TPR repeat units follow at residues 35–68 (AFTY…EIDP), 72–105 (SYIL…NPFL), and 120–153 (GEQA…TPGN).

It belongs to the Ycf3 family.

The protein resides in the plastid. It is found in the chloroplast thylakoid membrane. In terms of biological role, essential for the assembly of the photosystem I (PSI) complex. May act as a chaperone-like factor to guide the assembly of the PSI subunits. In Solanum tuberosum (Potato), this protein is Photosystem I assembly protein Ycf3.